The chain runs to 392 residues: Fasciculation and elongation protein zeta-1 (392 aa).

A disordered region spans residues 1–37; sequence MEAPLVSLDEEFEDLRPSCSEDPEEKPQCFYGSSPHH. Serine 58 carries the phosphoserine modification. The tract at residues 175 to 198 is disordered; that stretch reads MQNSPDPEEEEEVLEEEDGGETSS. A compositionally biased stretch (acidic residues) spans 180–194; it reads DPEEEEEVLEEEDGG. A coiled-coil region spans residues 230–298; the sequence is SELTELLDQV…KKRRKEKGLS (69 aa). Serine 298 and serine 316 each carry phosphoserine.

Belongs to the zygin family. As to quaternary structure, homodimer; disulfide-linked. May form heterodimers with FEZ2. Interacts with the NH2-terminal variable region (V1) of PKC zeta and weakly with that of PKC epsilon. Interacts with UBE4B. Interacts with SAP30L. Interacts with SCOC and ULK1; SCOC interferes with ULK1-binding to FEZ1. Directly interacts with SCOC and UVRAG. Stabilizes the interaction between SCOC and UVRAG during amino acid starvation. Post-translationally, phosphorylated by protein kinase C zeta; which enhances interaction with UBE4B and polyubiquitination. In terms of processing, polyubiquitinated in a UBE4B-dependent manner; which does not lead to proteasomal degradation and may be important for neurogenic activity. Polyubiquitin linkage seems to be mainly through Lys-26. Mainly expressed in brain.

The protein resides in the cytoplasm. It localises to the cytoskeleton. Its subcellular location is the microtubule organizing center. It is found in the centrosome. The protein localises to the cell membrane. Functionally, may be involved in axonal outgrowth as component of the network of molecules that regulate cellular morphology and axon guidance machinery. Able to restore partial locomotion and axonal fasciculation to C.elegans unc-76 mutants in germline transformation experiments. May participate in the transport of mitochondria and other cargos along microtubules. The sequence is that of Fasciculation and elongation protein zeta-1 (FEZ1) from Homo sapiens (Human).